We begin with the raw amino-acid sequence, 216 residues long: Probable transaldolase (216 aa).

K83 acts as the Schiff-base intermediate with substrate in catalysis.

It belongs to the transaldolase family. Type 3B subfamily.

It localises to the cytoplasm. It catalyses the reaction D-sedoheptulose 7-phosphate + D-glyceraldehyde 3-phosphate = D-erythrose 4-phosphate + beta-D-fructose 6-phosphate. It participates in carbohydrate degradation; pentose phosphate pathway; D-glyceraldehyde 3-phosphate and beta-D-fructose 6-phosphate from D-ribose 5-phosphate and D-xylulose 5-phosphate (non-oxidative stage): step 2/3. Functionally, transaldolase is important for the balance of metabolites in the pentose-phosphate pathway. The polypeptide is Probable transaldolase (Sphingopyxis alaskensis (strain DSM 13593 / LMG 18877 / RB2256) (Sphingomonas alaskensis)).